A 218-amino-acid chain; its full sequence is 3,4-dihydroxy-2-butanone 4-phosphate synthase (218 aa).

Residues 37–38 (RE), Asp-42, 150–154 (RSGHT), and Glu-174 each bind D-ribulose 5-phosphate. Glu-38 lines the Mg(2+) pocket. His-153 contributes to the Mg(2+) binding site.

It belongs to the DHBP synthase family. As to quaternary structure, homodimer. It depends on Mg(2+) as a cofactor. Requires Mn(2+) as cofactor.

It carries out the reaction D-ribulose 5-phosphate = (2S)-2-hydroxy-3-oxobutyl phosphate + formate + H(+). It participates in cofactor biosynthesis; riboflavin biosynthesis; 2-hydroxy-3-oxobutyl phosphate from D-ribulose 5-phosphate: step 1/1. Its function is as follows. Catalyzes the conversion of D-ribulose 5-phosphate to formate and 3,4-dihydroxy-2-butanone 4-phosphate. The sequence is that of 3,4-dihydroxy-2-butanone 4-phosphate synthase from Hamiltonella defensa subsp. Acyrthosiphon pisum (strain 5AT).